A 554-amino-acid chain; its full sequence is Formate--tetrahydrofolate ligase (554 aa).

64-71 (TPYGEGKT) contributes to the ATP binding site.

It belongs to the formate--tetrahydrofolate ligase family.

The enzyme catalyses (6S)-5,6,7,8-tetrahydrofolate + formate + ATP = (6R)-10-formyltetrahydrofolate + ADP + phosphate. The protein operates within one-carbon metabolism; tetrahydrofolate interconversion. The protein is Formate--tetrahydrofolate ligase of Caldicellulosiruptor saccharolyticus (strain ATCC 43494 / DSM 8903 / Tp8T 6331).